The chain runs to 431 residues: Beclin-2 (431 aa).

A disordered region spans residues 17–74; that stretch reads LSGSSESRSLPAAPAPTSGQAEPGDTREPGVTTREVTDAEEQQDGASSRSPPGDGSVS. A coiled-coil region spans residues 125–248; it reads LLEQLDIQLA…ARVQRDRLKE (124 aa). Residues 173–243 are required for homodimer formation; the sequence is EARLVQELED…NQLQYARVQR (71 aa).

The protein belongs to the beclin family. As to quaternary structure, homodimer (via coiled-coil domain). Interacts (via coiled-coil domain) with ATG14 (via coiled-coil domain); this interaction is tighter than BECN2 self-association. Interacts with AMBRA1, UVRAG and PIK3C3/VPS34; these interactions are not disrupted by starvation. Does not interact with RUBCN. Interacts (via N-terminus) with GPRASP1/GASP1; the interaction is direct. In terms of tissue distribution, present in fetal and adult brain (at protein level).

Its subcellular location is the cytoplasm. Involved in 2 distinct lysosomal degradation pathways: acts as a regulator of autophagy and as a regulator of G-protein coupled receptors turnover. Regulates degradation in lysosomes of a variety of G-protein coupled receptors via its interaction with GPRASP1/GASP1. The protein is Beclin-2 of Homo sapiens (Human).